The primary structure comprises 462 residues: Trigger factor (462 aa).

Residues 161 to 246 (GDVVVIDFVG…VKEVRAPKAA (86 aa)) form the PPIase FKBP-type domain. Residues 428–437 (SVEDLRKDPD) are compositionally biased toward basic and acidic residues. Positions 428-462 (SVEDLRKDPDEASADGEAAPAKPKKKAAAKKKAAE) are disordered. Residues 449-462 (KPKKKAAAKKKAAE) are compositionally biased toward basic residues.

Belongs to the FKBP-type PPIase family. Tig subfamily.

The protein resides in the cytoplasm. The enzyme catalyses [protein]-peptidylproline (omega=180) = [protein]-peptidylproline (omega=0). Its function is as follows. Involved in protein export. Acts as a chaperone by maintaining the newly synthesized protein in an open conformation. Functions as a peptidyl-prolyl cis-trans isomerase. The protein is Trigger factor of Paramagnetospirillum magneticum (strain ATCC 700264 / AMB-1) (Magnetospirillum magneticum).